A 360-amino-acid polypeptide reads, in one-letter code: 3-isopropylmalate dehydrogenase (360 aa).

76-89 contributes to the NAD(+) binding site; the sequence is GPKWDTIERDIRPE. Substrate contacts are provided by R96, R106, R134, and D224. Residues D224, D248, and D252 each contribute to the Mg(2+) site. Position 282–294 (282–294) interacts with NAD(+); sequence GSAPDIAGKGIAN.

Belongs to the isocitrate and isopropylmalate dehydrogenases family. LeuB type 1 subfamily. In terms of assembly, homodimer. Mg(2+) is required as a cofactor. The cofactor is Mn(2+).

It is found in the cytoplasm. It carries out the reaction (2R,3S)-3-isopropylmalate + NAD(+) = 4-methyl-2-oxopentanoate + CO2 + NADH. It functions in the pathway amino-acid biosynthesis; L-leucine biosynthesis; L-leucine from 3-methyl-2-oxobutanoate: step 3/4. Its function is as follows. Catalyzes the oxidation of 3-carboxy-2-hydroxy-4-methylpentanoate (3-isopropylmalate) to 3-carboxy-4-methyl-2-oxopentanoate. The product decarboxylates to 4-methyl-2 oxopentanoate. This is 3-isopropylmalate dehydrogenase from Pseudomonas fluorescens (strain Pf0-1).